The chain runs to 305 residues: uncharacterized protein (305 aa).

Transmembrane regions (helical) follow at residues 11-31, 37-57, 70-90, 97-117, 126-146, 148-168, 180-200, 217-237, 244-264, and 265-285; these read LLLA…KAAL, LLFA…VALP, IYLV…TIGL, LFSA…WLWL, VIGL…GFGG, ISVI…LGTV, IWMV…SGFW, LLFI…TLVG, VASY…IFLH, and EPLT…ICLV. EamA domains are found at residues 18–141 and 161–287; these read IMWG…VISA and VSWA…LVNT.

The protein belongs to the EamA transporter family.

It localises to the cell membrane. This is an uncharacterized protein from Bacillus subtilis (strain 168).